A 212-amino-acid chain; its full sequence is ATP-dependent dethiobiotin synthetase BioD (212 aa).

10 to 15 (GVGKTF) serves as a coordination point for ATP. Thr-14 contributes to the Mg(2+) binding site. Lys-36 is an active-site residue. Ser-40 provides a ligand contact to substrate. ATP is bound by residues Asp-45, 106–109 (EGAG), and 167–168 (NC). Mg(2+)-binding residues include Asp-45 and Glu-106.

Belongs to the dethiobiotin synthetase family. In terms of assembly, homodimer. Mg(2+) serves as cofactor.

Its subcellular location is the cytoplasm. It carries out the reaction (7R,8S)-7,8-diammoniononanoate + CO2 + ATP = (4R,5S)-dethiobiotin + ADP + phosphate + 3 H(+). It functions in the pathway cofactor biosynthesis; biotin biosynthesis; biotin from 7,8-diaminononanoate: step 1/2. In terms of biological role, catalyzes a mechanistically unusual reaction, the ATP-dependent insertion of CO2 between the N7 and N8 nitrogen atoms of 7,8-diaminopelargonic acid (DAPA, also called 7,8-diammoniononanoate) to form a ureido ring. The polypeptide is ATP-dependent dethiobiotin synthetase BioD (Methanococcus aeolicus (strain ATCC BAA-1280 / DSM 17508 / OCM 812 / Nankai-3)).